The primary structure comprises 589 residues: Transcription factor atf-6 homolog (589 aa).

Over residues 1-16 (MNFDNTVHESNFDDLL) the composition is skewed to basic and acidic residues. The segment at 1-82 (MNFDNTVHES…SSPPLSCANF (82 aa)) is disordered. 2 stretches are compositionally biased toward low complexity: residues 36-54 (GTDE…FSDQ) and 67-78 (GDSSSDSSPPLS). Residues 250-299 (QNRKIRNRMYAQASRMRKKEADEHMKMNLQELLQENEILRTENAALKQRL) enclose the bZIP domain. Residues 252–275 (RKIRNRMYAQASRMRKKEADEHMK) are basic motif. A coiled-coil region spans residues 271–305 (DEHMKMNLQELLQENEILRTENAALKQRLAFFEHE). Residues 281 to 295 (LLQENEILRTENAAL) are leucine-zipper. Residues 324–344 (IIAAGSVLMMFGLFAVISPFN) traverse the membrane as a helical segment.

Belongs to the bZIP family. ATF subfamily.

Its subcellular location is the nucleus. The protein localises to the membrane. Transcription factor. Plays a role in the unfolded protein response (UPR), perhaps mainly during constitutive endoplasmic reticulum (ER) stress, by activating transcription of genes involved in the UPR. Plays a role in modulating lifespan, acting by positively regulating expression of calcium-binding chaperone crt-1, thereby influencing ER calcium homeostasis. By activating the UPR pathway, confers adaptive protection to subsequent exposure to hypoxia. Involved in protection against proteotoxicity, probably acting via the UPR. Probably acts in the UPR in parallel with the ire-1-xbp-1 and pek-1 pathways. May be regulated by endopeptidase S2P-mediated proteolytic cleavage. This Caenorhabditis elegans protein is Transcription factor atf-6 homolog.